Consider the following 240-residue polypeptide: MAEYLASIFGTEKDKVNCSFYFKIGACRHGDRCSRLHNKPTFSQTIALLNIYRNPQNSSQSADGLRCAVSDVEMQEHYDEFFEEVFTEMEEKYGEVEEMNVCDNLGDHLVGNVYVKFRREEDAEKAVIDLNNRWFNGQPIHAELSPVTDFREACCRQYEMGECTRGGFCNFMHLKPISRELRRELYGRRRKKHRSRSRSRERRSRSRDRGRGGGGGGGGGGGGRERDRRRSRDRERSGRF.

An N-acetylalanine modification is found at Ala-2. The C3H1-type 1 zinc-finger motif lies at Glu-12 to Pro-40. Lys-39 is modified (N6-methyllysine). Phosphoserine is present on residues Ser-61 and Ser-145. Positions Leu-65–Val-147 constitute an RRM domain. The C3H1-type 2 zinc finger occupies Asp-149–Pro-176. Position 165 is an omega-N-methylarginine (Arg-165). The segment at Arg-183 to Phe-240 is disordered. A compositionally biased stretch (basic residues) spans Arg-188 to Asp-208. Over residues Gly-212–Gly-222 the composition is skewed to gly residues. Basic and acidic residues predominate over residues Gly-223–Phe-240.

It belongs to the splicing factor SR family. As to quaternary structure, identified in the spliceosome C complex. Heterodimer with U2AF2. Interacts (via RS domain) with PHF5A (via N-terminus). Interacts with ZRANB2. Interacts with SDE2. Interacts with SF3B1.

It localises to the nucleus. Its subcellular location is the nucleus speckle. Functionally, plays a critical role in both constitutive and enhancer-dependent splicing by mediating protein-protein interactions and protein-RNA interactions required for accurate 3'-splice site selection. Recruits U2 snRNP to the branch point. Directly mediates interactions between U2AF2 and proteins bound to the enhancers and thus may function as a bridge between U2AF2 and the enhancer complex to recruit it to the adjacent intron. This Homo sapiens (Human) protein is Splicing factor U2AF 35 kDa subunit (U2AF1).